The primary structure comprises 1134 residues: MSFRFIYGRAGSGKSKFCIDDIEKRLQEDTNKQLILIVPEQFSFQAEKSVVEKVKGTGITNVKVTSFERIAYDVFNEVGGSTHKIINSSGKLMLIFNIINNLKDELKVFATAANQEGFVNNISDIITELKRYDVTATELRATLNLIEDEFLKDKINDISYIFEQFQESLHKNYIDSEDELTLLYRKIDTSKMFDGAEVWIDEFSSFTPQQYKILEKLMEKASRVNITLCMDYYRVIDGTDVFAPTKRTEEKLREILKEKDVKLDKPIILNNDDVNRFKDSSELKYLEENYFKYPYKPYDKTTDDIKIIRALNPYSEVENIAKEIAKISMESNIRYRDIAVITRDLEGYEKIVKTIFDEYEIPYFIDKKKEIDDNPLIVLITSVIEIFNKSWSYEAMFRYLKTGLSNVSKEEVDLLENYVLAYGIRGKKKWQSPWEYGNENILEKINEIRIKVSEPLIKFSSKLKGKSKADEICSAVYNFLCSIGVNETIEKWVYKFKNEGNQALAKEYSQIWNMVIELLDQVVEVFKEEELQLKDFVKILSLGFKDYKMGLIPPSLDQVLVSDVERVRTHEIKLLYIIGVNDGIFPAVSKDEGILSDSDRGSLKKIGIEIAEDTKSKAFEEQYLIYRTLTTTQKYLRICYSIADYEGKALRPSIIVSRFKSLFPKIAEESDNIAMDYEEENIDLISREIPTFNNLVSVLRREDNKVKVSPFWSDVYKWYSENPRWKETLDTVFSAISYTNAVDDISEEKIRKMYGNKLYLTVSRLEKYAQCPFGYYIKYGLKAKERKIFALTPPDLGTFMHNVIDEFSEVVDKSGFKWYEIEDKWCKDTVSEIVDRKAEESAGGIFTSSARYKYFTERLKRVLIKTILVIIEHLKRSGFQPIGHEVGFGNDEKYPPIEIELSSGEKVKLIGRIDRVDKLDMEKKDYYRIIDYKSGNKDFSLSDVYYGLQLQLLTYLDAILTNEELKDREEALPGGVLYLKIDDPIIKGKRNLSEEEIQDEIMKALKMKGLLLADEEVVKEMDRKIEGNSLIIPARINKDGSLGKSSVGTEEQFRLLREHVKKNLIKACEDMLKGDIKIRPIRSKNADACTYCLYSSICEFDTNFEDNEFKVVQEKKDEEVWELLRKEGEESWEK.

8–15 contributes to the ATP binding site; sequence GRAGSGKS. The [4Fe-4S] cluster site is built by cysteine 771, cysteine 1089, cysteine 1092, and cysteine 1098.

It belongs to the helicase family. AddB/RexB type 1 subfamily. Heterodimer of AddA and AddB. Mg(2+) is required as a cofactor. It depends on [4Fe-4S] cluster as a cofactor.

In terms of biological role, the heterodimer acts as both an ATP-dependent DNA helicase and an ATP-dependent, dual-direction single-stranded exonuclease. Recognizes the chi site generating a DNA molecule suitable for the initiation of homologous recombination. The AddB subunit has 5' -&gt; 3' nuclease activity but not helicase activity. The sequence is that of ATP-dependent helicase/deoxyribonuclease subunit B from Clostridium novyi (strain NT).